The chain runs to 237 residues: Ribitol-5-phosphate cytidylyltransferase (237 aa).

CTP-binding positions include 7 to 10 (LAGG) and 80 to 86 (GEDRNET).

The protein belongs to the IspD/TarI cytidylyltransferase family. TarI subfamily.

The catalysed reaction is D-ribitol 5-phosphate + CTP + H(+) = CDP-L-ribitol + diphosphate. The protein operates within cell wall biogenesis; poly(ribitol phosphate) teichoic acid biosynthesis. In terms of biological role, catalyzes the transfer of the cytidylyl group of CTP to D-ribitol 5-phosphate. The protein is Ribitol-5-phosphate cytidylyltransferase of Listeria monocytogenes serotype 4b (strain F2365).